We begin with the raw amino-acid sequence, 229 residues long: Protein TraJ (229 aa).

The protein resides in the cytoplasm. In terms of biological role, this protein is essential for positively regulating the expression of transfer genes that are involved in the conjugal transfer of DNA between bacterial cells. The chain is Protein TraJ (traJ) from Escherichia coli (strain K12).